Reading from the N-terminus, the 394-residue chain is MRNQTFIIVGAGQAGAMAAATLRQQQFDGDIILIGKEYHAPYERPILSKDYLINPEEAPKYLFSEDFYLEKQIDLRIGQLVSQIMPSKHCVVLENGGKLRYDKLLLTMGARARRFPLLDQLGENIYTLRTLDDAQRLRQAVKKDKRILIVGGGVIGLELAATSCELGANVTVIEQADNIMGRCAPPLLQDYLLNRHQEKGVQFFLDTNIVSAQKQGSELVLILNTGEKVIGDIIIYGIGAEFRDQLAADAGLVTDGGIVIDSRCQTSEPDIFAAGDVCLQREPLTGDLQRRETWENANRQATIAAHAMMGLAPPQPGAPWFWTDQWGINIQMVGNMQAEEWHIQGDLQSDKAILFGTENEVLVGAVAINQGREMRNLRKLLANPAQVVSGVEWA.

FAD is bound at residue 5-36 (TFIIVGAGQAGAMAAATLRQQQFDGDIILIGK). 146-174 (RILIVGGGVIGLELAATSCELGANVTVIE) contributes to the NAD(+) binding site.

It belongs to the bacterial ring-hydroxylating dioxygenase ferredoxin reductase family. As to quaternary structure, this dioxygenase system consists of four proteins: the two subunits of the hydroxylase component (HcaE and HcaF), a ferredoxin (HcaC) and a ferredoxin reductase (HcaD). FAD serves as cofactor.

The catalysed reaction is 2 reduced [2Fe-2S]-[ferredoxin] + NAD(+) + H(+) = 2 oxidized [2Fe-2S]-[ferredoxin] + NADH. It functions in the pathway aromatic compound metabolism; 3-phenylpropanoate degradation. Its function is as follows. Part of the multicomponent 3-phenylpropionate dioxygenase, that converts 3-phenylpropionic acid (PP) and cinnamic acid (CI) into 3-phenylpropionate-dihydrodiol (PP-dihydrodiol) and cinnamic acid-dihydrodiol (CI-dihydrodiol), respectively. The sequence is that of 3-phenylpropionate/cinnamic acid dioxygenase ferredoxin--NAD(+) reductase component from Photorhabdus laumondii subsp. laumondii (strain DSM 15139 / CIP 105565 / TT01) (Photorhabdus luminescens subsp. laumondii).